Here is a 457-residue protein sequence, read N- to C-terminus: Multidrug resistance protein MdtK (457 aa).

12 helical membrane passes run 11-31 (LLAL…MGFV), 53-73 (IWLP…PVIA), 93-113 (WLAG…GYII), 127-147 (AVGY…FQVA), 160-180 (GMVM…IFIY), 188-208 (LGGI…FIAM), 243-263 (LPIA…ALLV), 276-296 (IALN…AAVT), 314-334 (AART…IFTV), 350-370 (VVAL…SDSI), 387-407 (IFFI…YILA), and 418-438 (PAGF…LMML).

It belongs to the multi antimicrobial extrusion (MATE) (TC 2.A.66.1) family. MdtK subfamily.

The protein resides in the cell inner membrane. Functionally, multidrug efflux pump that functions probably as a Na(+)/drug antiporter. In Salmonella enteritidis PT4 (strain P125109), this protein is Multidrug resistance protein MdtK.